The following is an 80-amino-acid chain: uncharacterized protein (80 aa).

4Fe-4S ferredoxin-type domains follow at residues 21-49 (KIIE…AIKN) and 50-80 (NRVV…LYDA). Residues Cys30, Cys33, Cys36, Cys40, Cys60, Cys63, Cys66, and Cys70 each coordinate [4Fe-4S] cluster.

It depends on [4Fe-4S] cluster as a cofactor.

This is an uncharacterized protein from Methanocaldococcus jannaschii (strain ATCC 43067 / DSM 2661 / JAL-1 / JCM 10045 / NBRC 100440) (Methanococcus jannaschii).